Here is a 44-residue protein sequence, read N- to C-terminus: MSDKPDVKEVESFDKTTLKKTTTNEKNTLPTKEVIEQEKSGGSD.

The segment covering 1–17 (MSDKPDVKEVESFDKTT) has biased composition (basic and acidic residues). The segment at 1–44 (MSDKPDVKEVESFDKTTLKKTTTNEKNTLPTKEVIEQEKSGGSD) is disordered. The span at 19 to 32 (KKTTTNEKNTLPTK) shows a compositional bias: low complexity. Positions 33–44 (EVIEQEKSGGSD) are enriched in basic and acidic residues.

This sequence belongs to the thymosin beta family.

The protein localises to the cytoplasm. It is found in the cytoskeleton. In terms of biological role, plays an important role in the organization of the cytoskeleton. Binds to and sequesters actin monomers (G actin) and therefore inhibits actin polymerization. The protein is Thymosin beta of Gillichthys mirabilis (Long-jawed mudsucker).